The primary structure comprises 434 residues: [Pyruvate dehydrogenase (acetyl-transferring)] kinase isozyme 1, mitochondrial (434 aa).

A mitochondrion-targeting transit peptide spans 1 to 26 (MRLARLLRGGTSVRPLCAVPCASRSL). Y136 carries the phosphotyrosine; by FGFR1 modification. Residues 161–391 (TEYKESFGVD…DAVIYIKALS (231 aa)) form the Histidine kinase domain. At Y241 the chain carries Phosphotyrosine; by FGFR1, ABL1, FLT3 and JAK2. Y242 is subject to Phosphotyrosine; by FGFR1. ATP contacts are provided by residues 277-284 (ELFKNAMR), D316, 335-336 (ST), and 352-357 (GFGYGL). T336 carries the phosphothreonine modification. N6-succinyllysine is present on K403.

This sequence belongs to the PDK/BCKDK protein kinase family. Homodimer, and heterodimer with PDK2. Interacts with the pyruvate dehydrogenase complex subunit DLAT, and is part of the multimeric pyruvate dehydrogenase complex that contains multiple copies of pyruvate dehydrogenase (E1), dihydrolipoamide acetyltransferase (DLAT, E2) and lipoamide dehydrogenase (DLD, E3). Interacts with phosphoglycerate kinase PGK1; the interaction is direct, occurs under hypoxic conditions and leads to PDK1-mediated inhibition of pyruvate dehydrogenase complex activity. In terms of processing, phosphorylated by constitutively activated ABL1, FGFR1, FLT3 and JAK2 (in vitro), and this may also occur in cancer cells that express constitutively activated ABL1, FGFR1, FLT3 and JAK2. Phosphorylation at Tyr-241 and Tyr-242 strongly increases kinase activity, while phosphorylation at Tyr-136 has a lesser effect. Phosphorylated under hypoxic conditions at Thr-336 by phosphoglycerate kinase PGK1 which has an activating effect. As to expression, detected in pancreas islets (at protein level). Expressed predominantly in the heart.

The protein resides in the mitochondrion matrix. The catalysed reaction is L-seryl-[pyruvate dehydrogenase E1 alpha subunit] + ATP = O-phospho-L-seryl-[pyruvate dehydrogenase E1 alpha subunit] + ADP + H(+). Its activity is regulated as follows. Activated by binding to the pyruvate dehydrogenase complex subunit DLAT. Strongly activated by NADH plus acetyl-coenzyme A. Inhibited by dichloroacetate. Its function is as follows. Kinase that plays a key role in regulation of glucose and fatty acid metabolism and homeostasis via phosphorylation of the pyruvate dehydrogenase subunits PDHA1 and PDHA2. This inhibits pyruvate dehydrogenase activity, and thereby regulates metabolite flux through the tricarboxylic acid cycle, down-regulates aerobic respiration and inhibits the formation of acetyl-coenzyme A from pyruvate. Plays an important role in cellular responses to hypoxia and is important for cell proliferation under hypoxia. The polypeptide is [Pyruvate dehydrogenase (acetyl-transferring)] kinase isozyme 1, mitochondrial (Pdk1) (Rattus norvegicus (Rat)).